The primary structure comprises 528 residues: Berberine bridge enzyme-like 17 (528 aa).

The N-terminal stretch at 1-19 (MKEVVYVLLLVLLVSVSDA) is a signal peptide. N-linked (GlcNAc...) asparagine glycosylation is found at N20, N35, N52, and N72. C32 and C94 form a disulfide bridge. The region spanning 69–246 (LNPNDTKLIA…LSWKINLVDV (178 aa)) is the FAD-binding PCMH-type domain. The segment at residues 109–171 (HDYEGLSFTS…KTLAFAGGVC (63 aa)) is a cross-link (6-(S-cysteinyl)-8alpha-(pros-histidyl)-FAD (His-Cys)). 3 N-linked (GlcNAc...) asparagine glycosylation sites follow: N256, N340, and N439.

It belongs to the oxygen-dependent FAD-linked oxidoreductase family. FAD serves as cofactor. The FAD cofactor is bound via a bicovalent 6-S-cysteinyl, 8alpha-N1-histidyl FAD linkage.

The protein localises to the secreted. The protein resides in the cell wall. The protein is Berberine bridge enzyme-like 17 of Arabidopsis thaliana (Mouse-ear cress).